We begin with the raw amino-acid sequence, 604 residues long: NRPS-independent siderophore synthetase-like protein ankE (604 aa).

The enzyme catalyses cyclo(L-arginyl-(Z)-dehydro-4-O-homoseryl-tyrosyl) + citrate + ATP = NK13650 B + AMP + diphosphate + H(+). The protein operates within secondary metabolite biosynthesis. NRPS-independent siderophore synthetase-like protein; part of the ank cluster that mediates the biosynthesis of NK13650 C, a highly modified cyclo-arginine-tyrosine dipeptide. AnkE is responsible of the production of NK13650 B via ligation of citrate to the ankD product. Within the pathway, the cyclodipeptide synthase ankA acts as the scaffold-generating enzyme and is responsible for formation of the cyclo-Arg-Tyr diketopiperazine (cRY) from L-Arg and L-Tyr. The ankA product cRY is desaturated by the cytochrome P450 monooxygenase ankB to yield a dehydro-cyclodipeptide intermediate. The FAD-dependent monooxygenase ankC then installs the m-OH, ankD catalyzes the attachment of L-homoserine, and ankE ligates citrate to the ankD product to yield NK13650 B. The O-methyltransferase ankF is responsible for methylation of the C-17 phenol group of NK13650 B to produce NK13650 D. Amidation of NK13650 D with L-Asp by ankG then leads to the production of NK13650 C, whereas amidation of NK13650 B produces NK13650 A. The sequence is that of NRPS-independent siderophore synthetase-like protein ankE from Aspergillus thermomutatus (Neosartorya pseudofischeri).